Consider the following 1033-residue polypeptide: Complement receptor type 2 (1033 aa).

Residues 1 to 20 (MGAAGLLGVFLALVAPGVLG) form the signal peptide. Sushi domains lie at 21-84 (ISCG…KCEY), 89-148 (SSCP…TCVS), 152-212 (LECP…TCEE), 213-273 (ARCK…VCEE), 274-344 (IFCP…RCEL), 349-408 (VQCP…VCEK), 409-468 (ECQA…QCKV), 469-524 (AACE…LCKE), 525-595 (ITCP…LCKL), 600-659 (VQCS…VCEK), 660-716 (ETCQ…LCKV), 717-781 (IHCH…QCLR), 786-845 (TRCP…TCIK), 849-909 (IGCP…HCKE), and 910-970 (VNCS…VCRS). The Extracellular segment spans residues 21 to 971 (ISCGSPPPIL…NPPLAVCRSR (951 aa)). Cystine bridges form between Cys-23–Cys-65, Cys-51–Cys-82, Cys-91–Cys-132, Cys-118–Cys-146, Cys-154–Cys-197, Cys-183–Cys-210, Cys-215–Cys-256, Cys-242–Cys-271, Cys-276–Cys-325, Cys-305–Cys-342, Cys-351–Cys-393, Cys-379–Cys-406, Cys-410–Cys-453, Cys-439–Cys-466, Cys-471–Cys-509, Cys-495–Cys-522, Cys-527–Cys-576, Cys-556–Cys-593, Cys-602–Cys-644, Cys-630–Cys-657, Cys-662–Cys-699, Cys-685–Cys-714, Cys-719–Cys-762, Cys-748–Cys-779, Cys-788–Cys-830, Cys-816–Cys-843, Cys-851–Cys-894, and Cys-880–Cys-907. N-linked (GlcNAc...) asparagine glycosylation is found at Asn-121 and Asn-127. A glycan (N-linked (GlcNAc...) asparagine) is linked at Asn-294. Asn-372 carries an N-linked (GlcNAc...) asparagine glycan. Residue Asn-492 is glycosylated (N-linked (GlcNAc...) asparagine). N-linked (GlcNAc...) asparagine glycosylation is present at Asn-623. Asn-682 carries N-linked (GlcNAc...) asparagine glycosylation. N-linked (GlcNAc...) asparagine glycans are attached at residues Asn-800, Asn-823, and Asn-861. Asn-911 is a glycosylation site (N-linked (GlcNAc...) asparagine). Disulfide bonds link Cys-912–Cys-955 and Cys-941–Cys-968. A helical membrane pass occupies residues 972–999 (SLAPVLCGIAAGLILLTFLIVITLYVIS). Topologically, residues 1000–1033 (KHRARNYYTDTSQKEAFHLEAREVYSVDPYNPAS) are cytoplasmic.

This sequence belongs to the receptors of complement activation (RCA) family. As to quaternary structure, interacts (via Sushi domain 1 and 2) with C3. Interacts with CD19. Part of a complex composed of CD19, CR2/CD21, CD81 and IFITM1/CD225 in the membrane of mature B-cells. Interacts (via Sushi domain 1 and 2) with FCER2 (via the C-terminus). Interacts with CD23. Interacts with FCRL5. Interacts with CR1. Interacts with INFNA1. (Microbial infection) Interacts with Epstein-Barr virus gp350 protein. As to expression, mature B-lymphocytes, T-lymphocytes, pharyngeal epithelial cells, astrocytes and follicular dendritic cells of the spleen.

It is found in the cell membrane. Serves as a receptor for various ligands including complement component CD3d, HNRNPU OR IFNA1. When C3d is bound to antigens, attaches to C3d on B-cell surface and thereby facilitates the recognition and uptake of antigens by B-cells. This interaction enhances B-cell activation and subsequent immune responses. Forms a complex with several partners on the surface of B-cells including CD19, FCRL5 and CD81, to form the B-cell coreceptor complex that plays a crucial role in B-cell activation and signaling. Also induces specific intracellular signaling separately from the BCR and CD19 by activating the tyrosine kinase SRC, which then phosphorylates nucleolin/NCL and triggers AKT and GSK3 kinase activities in a SYK/CD19-independent manner. Acts as a ligand for CD23 (FcepsilonRII), a low-affinity receptor for IgE, which is expressed on B-cells and other immune cells, and thus participates in the regulation of IgE production. In terms of biological role, (Microbial infection) Acts as a receptor for Epstein-Barr virus. This is Complement receptor type 2 (CR2) from Homo sapiens (Human).